We begin with the raw amino-acid sequence, 160 residues long: uncharacterized protein (160 aa).

Residues 8-28 form a helical membrane-spanning segment; it reads LLFILVFISGFILFTVYSYTA.

The protein localises to the membrane. This is an uncharacterized protein from Escherichia coli (strain K12).